The sequence spans 180 residues: Large ribosomal subunit protein uL5 (180 aa).

Belongs to the universal ribosomal protein uL5 family. Part of the 50S ribosomal subunit; part of the 5S rRNA/L5/L18/L25 subcomplex. Contacts the 5S rRNA and the P site tRNA. Forms a bridge to the 30S subunit in the 70S ribosome.

Functionally, this is one of the proteins that bind and probably mediate the attachment of the 5S RNA into the large ribosomal subunit, where it forms part of the central protuberance. In the 70S ribosome it contacts protein S13 of the 30S subunit (bridge B1b), connecting the 2 subunits; this bridge is implicated in subunit movement. Contacts the P site tRNA; the 5S rRNA and some of its associated proteins might help stabilize positioning of ribosome-bound tRNAs. This is Large ribosomal subunit protein uL5 from Symbiobacterium thermophilum (strain DSM 24528 / JCM 14929 / IAM 14863 / T).